The following is a 92-amino-acid chain: Small ribosomal subunit protein uS19c (92 aa).

This sequence belongs to the universal ribosomal protein uS19 family.

The protein resides in the plastid. The protein localises to the chloroplast. In terms of biological role, protein S19 forms a complex with S13 that binds strongly to the 16S ribosomal RNA. This chain is Small ribosomal subunit protein uS19c, found in Panax ginseng (Korean ginseng).